Reading from the N-terminus, the 415-residue chain is Multifunctional CCA protein (415 aa).

ATP-binding residues include Gly-8 and Arg-11. The CTP site is built by Gly-8 and Arg-11. Positions 21 and 23 each coordinate Mg(2+). Residues Arg-91, Arg-137, and Arg-140 each contribute to the ATP site. The CTP site is built by Arg-91, Arg-137, and Arg-140. Positions 228-329 constitute an HD domain; it reads AGTHTLMALD…VELFEGLDLF (102 aa).

It belongs to the tRNA nucleotidyltransferase/poly(A) polymerase family. Bacterial CCA-adding enzyme type 1 subfamily. In terms of assembly, monomer. Can also form homodimers and oligomers. It depends on Mg(2+) as a cofactor. Ni(2+) is required as a cofactor.

It carries out the reaction a tRNA precursor + 2 CTP + ATP = a tRNA with a 3' CCA end + 3 diphosphate. The enzyme catalyses a tRNA with a 3' CCA end + 2 CTP + ATP = a tRNA with a 3' CCACCA end + 3 diphosphate. Functionally, catalyzes the addition and repair of the essential 3'-terminal CCA sequence in tRNAs without using a nucleic acid template. Adds these three nucleotides in the order of C, C, and A to the tRNA nucleotide-73, using CTP and ATP as substrates and producing inorganic pyrophosphate. tRNA 3'-terminal CCA addition is required both for tRNA processing and repair. Also involved in tRNA surveillance by mediating tandem CCA addition to generate a CCACCA at the 3' terminus of unstable tRNAs. While stable tRNAs receive only 3'-terminal CCA, unstable tRNAs are marked with CCACCA and rapidly degraded. In Halorhodospira halophila (strain DSM 244 / SL1) (Ectothiorhodospira halophila (strain DSM 244 / SL1)), this protein is Multifunctional CCA protein.